A 540-amino-acid polypeptide reads, in one-letter code: 2-isopropylmalate synthase (540 aa).

A Pyruvate carboxyltransferase domain is found at 8-273; sequence VLIFDTTLRD…FFGRDQDSPT (266 aa). Mn(2+) contacts are provided by Asp-17, His-208, His-210, and Asn-244. The regulatory domain stretch occupies residues 408–540; it reads QLQLVQVSCG…AVVLDARPTL (133 aa).

It belongs to the alpha-IPM synthase/homocitrate synthase family. LeuA type 1 subfamily. As to quaternary structure, homodimer. It depends on Mn(2+) as a cofactor.

It is found in the cytoplasm. It carries out the reaction 3-methyl-2-oxobutanoate + acetyl-CoA + H2O = (2S)-2-isopropylmalate + CoA + H(+). Its pathway is amino-acid biosynthesis; L-leucine biosynthesis; L-leucine from 3-methyl-2-oxobutanoate: step 1/4. Functionally, catalyzes the condensation of the acetyl group of acetyl-CoA with 3-methyl-2-oxobutanoate (2-ketoisovalerate) to form 3-carboxy-3-hydroxy-4-methylpentanoate (2-isopropylmalate). The polypeptide is 2-isopropylmalate synthase (Parasynechococcus marenigrum (strain WH8102)).